A 69-amino-acid polypeptide reads, in one-letter code: MMKRLLIGMIRIYQRYISPLKRPSCRFYPTCSEYSIQAIQKYGVVKGCWKSLVRILKCHPFHPGGYDPV.

Belongs to the UPF0161 family.

Its subcellular location is the cell membrane. In terms of biological role, could be involved in insertion of integral membrane proteins into the membrane. This is Putative membrane protein insertion efficiency factor from Desulfitobacterium hafniense (strain Y51).